A 130-amino-acid polypeptide reads, in one-letter code: Putative ankyrin repeat protein R886 (130 aa).

ANK repeat units follow at residues 21–50 (NYDRTIINSSEYGNFEIVKYLIDNGADITA), 54–83 (YGFTPLDLSSKNGHYEIVKLLVECRASIIK), and 85–113 (DNLTLILASENGHIKIVKLLVENGADIRY).

This chain is Putative ankyrin repeat protein R886, found in Acanthamoeba polyphaga (Amoeba).